Here is a 479-residue protein sequence, read N- to C-terminus: Signal recognition particle subunit SRP54 1 (479 aa).

Residues 1–295 (MVLAELGGRI…DVKPFVSRLL (295 aa)) are G-domain. GTP contacts are provided by residues 108-115 (GLQGAGKT), 190-194 (DTSGR), and 248-251 (TKMD). The segment at 296–479 (GKGDWSGLVD…MMGMFGGGGK (184 aa)) is M-domain.

It belongs to the GTP-binding SRP family. SRP54 subfamily. As to quaternary structure, component of a signal recognition particle (SRP) complex that consists of a 7SL RNA molecule of 300 nucleotides and six protein subunits: SRP72, SRP68, SRP54, SRP19, SRP14 and SRP9.

The protein resides in the cytoplasm. The protein localises to the endoplasmic reticulum. The catalysed reaction is GTP + H2O = GDP + phosphate + H(+). Functionally, component of the signal recognition particle (SRP) complex, a ribonucleoprotein complex that mediates the cotranslational targeting of secretory and membrane proteins to the endoplasmic reticulum (ER). As part of the SRP complex, associates with the SRP receptor (SR) component SRPRA to target secretory proteins to the endoplasmic reticulum membrane. Binds to the signal sequence of presecretory proteins when they emerge from the ribosomes. Displays basal GTPase activity, and stimulates reciprocal GTPase activation of the SR subunit SRPRA. Forms a guanosine 5'-triphosphate (GTP)-dependent complex with the SR subunit SRPRA. SR compaction and GTPase mediated rearrangement of SR drive SRP-mediated cotranslational protein translocation into the ER. Requires the presence of SRP9/SRP14 and/or SRP19 to stably interact with RNA. This is Signal recognition particle subunit SRP54 1 (SRP-54A) from Arabidopsis thaliana (Mouse-ear cress).